A 256-amino-acid chain; its full sequence is N-glycosylase/DNA lyase (256 aa).

Gln-31, Ser-58, and Trp-69 together coordinate 8-oxoguanine. Residues 125-184 (TLRQLSHIVGARREQKTLVFTIKILNYAYMCSRGVNRVLPFDIPIPVDYRVARLTWCAGL) are helix-hairpin-helix. Lys-140 (schiff-base intermediate with DNA) is an active-site residue. Residues Phe-144 and Pro-170 each contribute to the 8-oxoguanine site. Residue Asp-172 is part of the active site. Positions 218 and 222 each coordinate 8-oxoguanine.

The protein belongs to the archaeal N-glycosylase/DNA lyase (AGOG) family.

The catalysed reaction is 2'-deoxyribonucleotide-(2'-deoxyribose 5'-phosphate)-2'-deoxyribonucleotide-DNA = a 3'-end 2'-deoxyribonucleotide-(2,3-dehydro-2,3-deoxyribose 5'-phosphate)-DNA + a 5'-end 5'-phospho-2'-deoxyribonucleoside-DNA + H(+). Its function is as follows. DNA repair enzyme that is part of the base excision repair (BER) pathway; protects from oxidative damage by removing the major product of DNA oxidation, 8-oxoguanine (GO), from single- and double-stranded DNA substrates. The chain is N-glycosylase/DNA lyase from Pyrobaculum aerophilum (strain ATCC 51768 / DSM 7523 / JCM 9630 / CIP 104966 / NBRC 100827 / IM2).